The sequence spans 922 residues: Cell cycle and apoptosis regulator protein 2 (922 aa).

The disordered stretch occupies residues 1-39 (MSQFKRQRINPLPGGRNFSGAASTSLLGPPPGLLTPPVA). Phosphothreonine is present on Thr-35. Residue Lys-112 is modified to N6-acetyllysine; by KAT8. Position 123 is an N6-methyllysine (Lys-123). Ser-124 is modified (phosphoserine). Disordered stretches follow at residues 178 to 219 (LNRF…KPRH), 280 to 307 (RIQV…PTYS), 446 to 508 (KATE…EPAV), and 567 to 638 (VSPP…RGEA). An Omega-N-methylarginine modification is found at Arg-180. Over residues 188-200 (GRLDQGRSDDYDS) the composition is skewed to basic and acidic residues. Position 215 is an N6-acetyllysine; by KAT8 (Lys-215). Residues 473–491 (QADTSKQNTETMEATTQQD) show a composition bias toward polar residues. Thr-483 carries the phosphothreonine modification. A Phosphoserine modification is found at Ser-568. Residues 571-601 (EPEKEEAAKEDAVKEEEAVKEEAVKVSKDEV) are compositionally biased toward basic and acidic residues. Residues 573 to 596 (EKEEAAKEDAVKEEEAVKEEAVKV) adopt a coiled-coil conformation. A Glycyl lysine isopeptide (Lys-Gly) (interchain with G-Cter in SUMO2 and SUMO3); alternate cross-link involves residue Lys-590. A Glycyl lysine isopeptide (Lys-Gly) (interchain with G-Cter in SUMO2); alternate cross-link involves residue Lys-590. The interaction with MCC stretch occupies residues 609-669 (ESDSPLKEDG…DEFAGAKLEE (61 aa)). Residues Ser-612, Ser-626, Ser-674, Ser-677, and Ser-680 each carry the phosphoserine modification. Tyr-684 carries the post-translational modification Phosphotyrosine. Phosphoserine is present on residues Ser-686 and Ser-807. The interval 703 to 922 (DCLLAFVFFD…VEKEEPTPSN (220 aa)) is interaction with NR1D1. Residues 828–898 (LENKIHTLEL…QDFRRRLTPL (71 aa)) adopt a coiled-coil conformation. Thr-896 carries the post-translational modification Phosphothreonine.

In terms of assembly, component of the DBIRD complex. Interacts with ZNF326/ZIRD; the interaction is direct. Interacts (via N-terminus) with SIRT1, which inhibits the deacetylation of substrates. Interacts (via N-terminus) with SUV39H1; this interaction abolishes the interaction with SIRT1. Component of a nuclear receptor-mediated transcription complex composed of at least ZNF335, CCAR2 and EMSY; the complex stimulates the transcription of nuclear receptor target genes such as SOX9 and HOXA1. Within the complex interacts with EMSY and interacts with ZNF335 (via C-terminus). Components of this complex may associate with components of a histone methylation complex to form a complex at least composed of ZNF335, HCFC1, CCAR2, EMSY, MKI67, RBBP5, ASH2L and WDR5. Within this complex, interacts with ASH2L. Interacts with NR1D1. Interacts (via N-terminus) with ESR1 and ESR2. Interacts (via N-terminus) with HDAC3 (via C-terminus). Interacts with HDAC1 and MED2F. Interacts with MCC. Interacts (via N-terminus) with NR1H2 and NR1H3 in a ligand-independent manner. Interacts with CSNK2A1. Interacts (via N-terminus) with p53/TP53. Interacts (via N-terminus) with BRCA1 (via the BRCT domains). Interacts (via N-terminus) with CHEK2 (via protein kinase domain). Interacts with PSEM3. Interacts (via N-terminus) with PSIA3 and SENP1. The sumoylated form shows a preferential interaction with SIRT1 as compared to its unmodified form. Interacts with CECR2; may form part of the CERF-1 and/or CEF-5 ISWI chromatin remodeling complexes in embryonic stem cells. Acetylation at Lys-112 and Lys-215 by KAT8 prevents inhibitory binding to SIRT1 and increases its deacetylase activity. In terms of processing, genotoxic stress induces its sumoylation and sumoylation promotes the SIRT1-CCAR2 interaction which in turn inhibits SIRT1-mediated deacetylation of p53/TP53. Sumoylation leads to transcriptional activation of p53/TP53 by sequestering SIRT1 from p53/TP53. Desumoylated by SENP1.

The protein resides in the nucleus. It is found in the cytoplasm. It localises to the cytoskeleton. Its subcellular location is the spindle. Its function is as follows. Core component of the DBIRD complex, a multiprotein complex that acts at the interface between core mRNP particles and RNA polymerase II (RNAPII) and integrates transcript elongation with the regulation of alternative splicing: the DBIRD complex affects local transcript elongation rates and alternative splicing of a large set of exons embedded in (A + T)-rich DNA regions. Inhibits SIRT1 deacetylase activity leading to increasing levels of p53/TP53 acetylation and p53-mediated apoptosis. Inhibits SUV39H1 methyltransferase activity. Mediates ligand-dependent transcriptional activation by nuclear hormone receptors. Plays a critical role in maintaining genomic stability and cellular integrity following UV-induced genotoxic stress. Regulates the circadian expression of the core clock components NR1D1 and BMAL1. Enhances the transcriptional repressor activity of NR1D1 through stabilization of NR1D1 protein levels by preventing its ubiquitination and subsequent degradation. Represses the ligand-dependent transcriptional activation function of ESR2. Acts as a regulator of PCK1 expression and gluconeogenesis by a mechanism that involves, at least in part, both NR1D1 and SIRT1. Negatively regulates the deacetylase activity of HDAC3 and can alter its subcellular localization. Positively regulates the beta-catenin pathway (canonical Wnt signaling pathway) and is required for MCC-mediated repression of the beta-catenin pathway. Represses ligand-dependent transcriptional activation function of NR1H2 and NR1H3 and inhibits the interaction of SIRT1 with NR1H3. Plays an important role in tumor suppression through p53/TP53 regulation; stabilizes p53/TP53 by affecting its interaction with ubiquitin ligase MDM2. Represses the transcriptional activator activity of BRCA1. Inhibits SIRT1 in a CHEK2 and PSEM3-dependent manner and inhibits the activity of CHEK2 in vitro. The protein is Cell cycle and apoptosis regulator protein 2 (Ccar2) of Mus musculus (Mouse).